Reading from the N-terminus, the 392-residue chain is Probable Ni/Fe-hydrogenase 2 b-type cytochrome subunit (392 aa).

Over 1–11 (MSHDPQPLGGK) the chain is Periplasmic. The chain crosses the membrane as a helical span at residues 12-32 (IISKPVMIFGPLIVICMLLIV). The Cytoplasmic segment spans residues 33 to 34 (KR). The helical transmembrane segment at 35-55 (LVFGLGSVSDLNGGFPWGVWI) threads the bilayer. Topologically, residues 56–58 (AFD) are periplasmic. Residues 59–79 (LLIGTGFACGGWALAWAVYVF) form a helical membrane-spanning segment. At 80-90 (NRGQYHPLVRP) the chain is on the cytoplasmic side. Residues 91 to 111 (ALLASLFGYSLGGLSITIDVG) traverse the membrane as a helical segment. At 112–133 (RYWNLPYFYIPGHFNVNSVLFE) the chain is on the periplasmic side. A helical membrane pass occupies residues 134–154 (TAVCMTIYIGVMALEFAPALF). The Cytoplasmic portion of the chain corresponds to 155–168 (ERLGWKVSLQRLNK). A helical membrane pass occupies residues 169-189 (VMFFIIALGALLPTMHQSSMG). The Periplasmic segment spans residues 190–207 (SLMISAGYKVHPLWQSYE). The chain crosses the membrane as a helical span at residues 208–228 (MLPLFSLLTAFIMGFSIVIFE). Residues 229–249 (GSLVQAGLRGNGPDEKSLFVK) lie on the Cytoplasmic side of the membrane. Residues 250 to 270 (LTNTISVLLAIFIVLRFGELI) traverse the membrane as a helical segment. Over 271 to 281 (YRDKLSLAFAG) the chain is Periplasmic. Residues 282–302 (DFYSVMFWIEVLLMLFPLVVL) form a helical membrane-spanning segment. At 303–333 (RVAKLRNDSRMLFLSALSALLGCATWRLTYS) the chain is on the cytoplasmic side. A helical transmembrane segment spans residues 334-354 (LVAFNPGGGYAYFPTWEELLI). Residue Ser355 is a topological domain, periplasmic. A helical transmembrane segment spans residues 356-376 (IGFVAIEICAYIVLIRLLPIL). Over 377-392 (PPLKQNDHNRHEASKA) the chain is Cytoplasmic.

This sequence belongs to the NrfD family.

It localises to the cell inner membrane. Functionally, probable b-type cytochrome. In Escherichia coli (strain K12), this protein is Probable Ni/Fe-hydrogenase 2 b-type cytochrome subunit (hybB).